The following is a 457-amino-acid chain: Glutamate--tRNA ligase 1 (457 aa).

A 'HIGH' region motif is present at residues 9–19 (PSPTGYIHIGN). Residues 250 to 254 (GLSKR) carry the 'KMSKS' region motif. Lysine 253 contacts ATP.

This sequence belongs to the class-I aminoacyl-tRNA synthetase family. Glutamate--tRNA ligase type 1 subfamily. Monomer.

Its subcellular location is the cytoplasm. The catalysed reaction is tRNA(Glu) + L-glutamate + ATP = L-glutamyl-tRNA(Glu) + AMP + diphosphate. Its function is as follows. Catalyzes the attachment of glutamate to tRNA(Glu) in a two-step reaction: glutamate is first activated by ATP to form Glu-AMP and then transferred to the acceptor end of tRNA(Glu). The chain is Glutamate--tRNA ligase 1 from Brucella ovis (strain ATCC 25840 / 63/290 / NCTC 10512).